The sequence spans 262 residues: 26 kDa secreted antigen (262 aa).

The signal sequence occupies residues 1–21 (MSVVHKACLIALLFVSSGVAQ). ShKT domains follow at residues 23–57 (CMDS…CNTC) and 59–93 (CRDE…CGLC). Cystine bridges form between cysteine 23-cysteine 57, cysteine 30-cysteine 50, cysteine 37-cysteine 54, cysteine 59-cysteine 93, cysteine 66-cysteine 86, and cysteine 73-cysteine 90.

It belongs to the phosphatidylethanolamine-binding protein family.

Its subcellular location is the secreted. Its function is as follows. Binds phosphatidylethanolamine. The chain is 26 kDa secreted antigen (TES-26) from Toxocara canis (Canine roundworm).